Here is a 163-residue protein sequence, read N- to C-terminus: MPSFDIVSEIDTQEVRNAVENATRDLSTRWDFRHVTARFEFDEKQKSIKVTSESDFQVKQMLEIISEKLAKRGIEGGALDISAEILHSGKTYSLDAKLKQGIESLKAKKLVKLIKDSKLKVQAQIQGEQVRVTGKSRNDLQAVMALIRTGDLGQPFQFNNFRD.

Belongs to the YajQ family.

Functionally, nucleotide-binding protein. This Hamiltonella defensa subsp. Acyrthosiphon pisum (strain 5AT) protein is Nucleotide-binding protein HDEF_1968.